Here is a 519-residue protein sequence, read N- to C-terminus: 3-octaprenyl-4-hydroxybenzoate carboxy-lyase (519 aa).

Asparagine 177 contacts Mn(2+). Residues isoleucine 180 to arginine 182, arginine 194 to leucine 196, and arginine 199 to glycine 200 each bind prenylated FMN. Glutamate 243 is a binding site for Mn(2+). The active-site Proton donor is aspartate 318.

Belongs to the UbiD family. In terms of assembly, homohexamer. Requires prenylated FMN as cofactor. It depends on Mn(2+) as a cofactor.

The protein resides in the cell membrane. The catalysed reaction is a 4-hydroxy-3-(all-trans-polyprenyl)benzoate + H(+) = a 2-(all-trans-polyprenyl)phenol + CO2. Its pathway is cofactor biosynthesis; ubiquinone biosynthesis. In terms of biological role, catalyzes the decarboxylation of 3-octaprenyl-4-hydroxy benzoate to 2-octaprenylphenol, an intermediate step in ubiquinone biosynthesis. The sequence is that of 3-octaprenyl-4-hydroxybenzoate carboxy-lyase from Burkholderia mallei (strain ATCC 23344).